A 235-amino-acid polypeptide reads, in one-letter code: Ribonuclease 3 (235 aa).

The 129-residue stretch at 7–135 (FAALEARLGH…VVAAVYLDGG (129 aa)) folds into the RNase III domain. A Mg(2+)-binding site is contributed by Glu48. Residue Asp52 is part of the active site. Mg(2+) contacts are provided by Asp121 and Glu124. Glu124 is an active-site residue. The DRBM domain occupies 160–229 (DPKTVLQEWA…ASAFLAREGV (70 aa)).

It belongs to the ribonuclease III family. As to quaternary structure, homodimer. The cofactor is Mg(2+).

The protein localises to the cytoplasm. The catalysed reaction is Endonucleolytic cleavage to 5'-phosphomonoester.. Digests double-stranded RNA. Involved in the processing of primary rRNA transcript to yield the immediate precursors to the large and small rRNAs (23S and 16S). Processes some mRNAs, and tRNAs when they are encoded in the rRNA operon. Processes pre-crRNA and tracrRNA of type II CRISPR loci if present in the organism. This chain is Ribonuclease 3, found in Azorhizobium caulinodans (strain ATCC 43989 / DSM 5975 / JCM 20966 / LMG 6465 / NBRC 14845 / NCIMB 13405 / ORS 571).